Consider the following 645-residue polypeptide: Glucans biosynthesis glucosyltransferase H (645 aa).

The segment covering methionine 1–threonine 12 has biased composition (polar residues). Residues methionine 1–alanine 22 form a disordered region. 7 consecutive transmembrane segments (helical) span residues leucine 64–tryptophan 84, leucine 98–valine 118, alanine 423–isoleucine 443, alanine 465–isoleucine 485, alanine 504–leucine 524, tyrosine 559–alanine 579, and leucine 580–leucine 600.

The protein belongs to the glycosyltransferase 2 family. OpgH subfamily.

The protein resides in the cell inner membrane. Its pathway is glycan metabolism; osmoregulated periplasmic glucan (OPG) biosynthesis. Its function is as follows. Involved in the biosynthesis of osmoregulated periplasmic glucans (OPGs). The polypeptide is Glucans biosynthesis glucosyltransferase H (Xanthomonas oryzae pv. oryzae (strain MAFF 311018)).